The primary structure comprises 197 residues: Phosphoheptose isomerase (197 aa).

The SIS domain maps to 41–197 (VVETFRRGGK…EIVERTLFEE (157 aa)). 56 to 58 (NGG) is a binding site for substrate. The Zn(2+) site is built by histidine 65 and glutamate 69. Substrate-binding positions include glutamate 69, 98–99 (ND), 124–126 (STS), serine 129, and glutamine 176. Residues glutamine 176 and histidine 184 each contribute to the Zn(2+) site.

This sequence belongs to the SIS family. GmhA subfamily. The cofactor is Zn(2+).

It is found in the cytoplasm. It catalyses the reaction 2 D-sedoheptulose 7-phosphate = D-glycero-alpha-D-manno-heptose 7-phosphate + D-glycero-beta-D-manno-heptose 7-phosphate. It participates in carbohydrate biosynthesis; D-glycero-D-manno-heptose 7-phosphate biosynthesis; D-glycero-alpha-D-manno-heptose 7-phosphate and D-glycero-beta-D-manno-heptose 7-phosphate from sedoheptulose 7-phosphate: step 1/1. In terms of biological role, catalyzes the isomerization of sedoheptulose 7-phosphate in D-glycero-D-manno-heptose 7-phosphate. The protein is Phosphoheptose isomerase of Roseiflexus sp. (strain RS-1).